The following is a 459-amino-acid chain: FBD-associated F-box protein At4g13985 (459 aa).

Positions 18-64 constitute an F-box domain; it reads VDRLRNLPDCLLFKILLNLPTKDVVKLSVLSRRWRNVWRYVPGLDLE. The FBD domain maps to 375–429; the sequence is KEGANILPGPRRFLTSLEYVKIAKPMAAEASEIKLKLVSYFLENSTILKKLTLCL.

The sequence is that of FBD-associated F-box protein At4g13985 from Arabidopsis thaliana (Mouse-ear cress).